Consider the following 929-residue polypeptide: Isoleucine--tRNA ligase (929 aa).

Positions 58 to 68 (PYANGDIHIGH) match the 'HIGH' region motif. Glu-563 is an L-isoleucyl-5'-AMP binding site. Positions 605–609 (KMSKS) match the 'KMSKS' region motif. Residue Lys-608 coordinates ATP. The Zn(2+) site is built by Cys-892, Cys-895, Cys-912, and Cys-915.

It belongs to the class-I aminoacyl-tRNA synthetase family. IleS type 1 subfamily. Monomer. Requires Zn(2+) as cofactor.

Its subcellular location is the cytoplasm. It catalyses the reaction tRNA(Ile) + L-isoleucine + ATP = L-isoleucyl-tRNA(Ile) + AMP + diphosphate. Its function is as follows. Catalyzes the attachment of isoleucine to tRNA(Ile). As IleRS can inadvertently accommodate and process structurally similar amino acids such as valine, to avoid such errors it has two additional distinct tRNA(Ile)-dependent editing activities. One activity is designated as 'pretransfer' editing and involves the hydrolysis of activated Val-AMP. The other activity is designated 'posttransfer' editing and involves deacylation of mischarged Val-tRNA(Ile). The sequence is that of Isoleucine--tRNA ligase from Neisseria meningitidis serogroup C / serotype 2a (strain ATCC 700532 / DSM 15464 / FAM18).